The chain runs to 105 residues: Guanyl-specific ribonuclease U1 (105 aa).

Pyrrolidone carboxylic acid is present on Gln1. Disulfide bonds link Cys8/Cys103 and Cys51/Cys87. His37 is a catalytic residue. The Proton acceptor role is filled by Glu57. The active-site Proton donor is His92.

Belongs to the ribonuclease N1/T1 family.

It catalyses the reaction [RNA] containing guanosine + H2O = an [RNA fragment]-3'-guanosine-3'-phosphate + a 5'-hydroxy-ribonucleotide-3'-[RNA fragment].. The protein is Guanyl-specific ribonuclease U1 of Ustilago sphaerogena (Smut fungus).